A 1040-amino-acid polypeptide reads, in one-letter code: Exosome RNA helicase MTR4 (1040 aa).

An N-acetylalanine modification is found at Ala-2. A disordered region spans residues 16-77 (DSTSAAGAKK…GTDEPIFGKK (62 aa)). The segment covering 23–33 (AKKDKEKEKWK) has biased composition (basic and acidic residues). Lys-24 is covalently cross-linked (Glycyl lysine isopeptide (Lys-Gly) (interchain with G-Cter in SUMO2)). Ser-38 carries the phosphoserine modification. Residues 41-50 (KAGKRLDTKL) show a composition bias toward basic and acidic residues. N6-acetyllysine is present on residues Lys-49 and Lys-76. Residues Ile-137, 159–166 (AHTSAGKT), Ser-162, Gly-164, Lys-165, and Thr-166 contribute to the ATP site. A Helicase ATP-binding domain is found at 146–302 (IQCVDNNQSV…WICHLHKQPC (157 aa)). The short motif at 250–253 (DEIH) is the DEIH box element. Lys-356 is covalently cross-linked (Glycyl lysine isopeptide (Lys-Gly) (interchain with G-Cter in SUMO2)). Residues 403–575 (QMTKLDFNTD…NMVLNLLRVE (173 aa)) enclose the Helicase C-terminal domain. Residues Lys-682 and Lys-721 each participate in a glycyl lysine isopeptide (Lys-Gly) (interchain with G-Cter in SUMO2) cross-link.

The protein belongs to the helicase family. SKI2 subfamily. In terms of assembly, component of a TRAMP-like complex, an ATP-dependent exosome regulatory complex consisting of a helicase (MTREX), an oligadenylate polymerase (TENT4B or TENT4A), and a substrate specific RNA-binding factor (ZCCHC7 or ZCCHC8). Several TRAMP-like complexes exist with specific compositions and are associated with nuclear, or nucleolar RNA exosomes. Identified in the spliceosome C complex. Component of the poly(A) tail exosome targeting (PAXT) complex made of PABPN1, ZFC3H1 and MTREX that directs a subset of long and polyadenylated poly(A) RNAs for exosomal degradation. Component of the nuclear exosome targeting (NEXT) complex composed of MTREX, ZCCHC8, and RBM7 that directs a subset of non-coding short-lived RNAs for exosomal degradation. Interacts with ZCCHC8; this interaction bridges the interaction between RBM7 and MTREX. Binds to ZFC3H1 and RBM7 in a RNase-insensitive manner. Interacts with EXOSC10; the interaction mediates the association of MTREX with nuclear RNA exosomes. Interacts with isoform 1 of NVL in an ATP-dependent manner; the interaction is required to associate NVL with nuclear RNA exosome. Interacts with WDR74; the interaction dissociation in a late stage of rRNA synthesis is required for appropriate maturation of pre-60S particles and depends on the ATPase activity of NVL. Interacts with MPHOSPH6. Interacts with the RNA cap-binding complex proteins NCBP1 and SRRT. Interacts with NRDE2; the interaction is direct and negatively regulates MTREX function in exosomal degradation by changing its conformation precluding interaction with ZFC3H1, the RNA cap-binding complex proteins NCBP1 and SRRT, and association with the exosome. Associates with the RNA exosome complex.

The protein resides in the nucleus. It is found in the nucleoplasm. The protein localises to the nucleolus. Its subcellular location is the nucleus speckle. It carries out the reaction ATP + H2O = ADP + phosphate + H(+). With respect to regulation, activated when MTREX is incorporated into NEXT complex an the nuclear RNA exosome complex. Functionally, catalyzes the ATP-dependent unwinding of RNA duplexes with a single-stranded 3' RNA extension. Central subunit of many protein complexes, namely TRAMP-like, nuclear exosome targeting (NEXT) and poly(A) tail exosome targeting (PAXT). NEXT functions as an RNA exosome cofactor that directs a subset of non-coding short-lived RNAs for exosomal degradation. NEXT is involved in surveillance and turnover of aberrant transcripts and non-coding RNAs. PAXT directs a subset of long and polyadenylated poly(A) RNAs for exosomal degradation. The RNA exosome is fundamental for the degradation of RNA in eukaryotic nuclei. Substrate targeting is facilitated by its cofactor ZCCHC8, which links to RNA-binding protein adapters. Associated with the RNA exosome complex and involved in the 3'-processing of the 7S pre-RNA to the mature 5.8S rRNA. May be involved in pre-mRNA splicing. In the context of NEXT complex can also in vitro unwind DNA:RNA heteroduplexes with a 3' poly (A) RNA tracking strand. Can promote unwinding and degradation of structured RNA substrates when associated with the nuclear exosome and its cofactors. Can displace a DNA strand while translocating on RNA to ultimately degrade the RNA within a DNA/RNA heteroduplex. Plays a role in DNA damage response. The sequence is that of Exosome RNA helicase MTR4 from Mus musculus (Mouse).